Here is a 690-residue protein sequence, read N- to C-terminus: Serotransferrin-1 (690 aa).

The N-terminal stretch at 1 to 18 (MKLLLLSALLGCLATAYA) is a signal peptide. 2 Transferrin-like domains span residues 25–329 (VKWC…SLKK) and 340–669 (IKWC…SLRK). An intrachain disulfide couples C28 to C50. Positions 74 and 104 each coordinate Fe(3+). 3 disulfides stabilise this stretch: C127/C207, C172/C186, and C235/C249. Hydrogencarbonate is bound by residues T129, S134, G136, and W137. A glycan (N-linked (GlcNAc...) asparagine) is linked at N169. Y201 serves as a coordination point for Fe(3+). H257 is a Fe(3+) binding site. 2 cysteine pairs are disulfide-bonded: C343–C379 and C353–C370. Residues D394 and Y428 each contribute to the Fe(3+) site. Disulfide bonds link C404–C681, C419–C642, C451–C529, C475–C670, C485–C499, C496–C512, and C569–C583. Residues T453, R457, A459, and G460 each coordinate hydrogencarbonate. Y523 serves as a coordination point for Fe(3+). H591 is a Fe(3+) binding site.

It belongs to the transferrin family. In terms of assembly, monomer. As to expression, abundant in liver and serum with smaller amounts found in the stomach and kidney.

It localises to the secreted. Functionally, transferrins are iron binding transport proteins which can bind two Fe(3+) ions in association with the binding of an anion, usually bicarbonate. It is responsible for the transport of iron from sites of absorption and heme degradation to those of storage and utilization. Serum transferrin may also have a further role in stimulating cell proliferation. The protein is Serotransferrin-1 (tf1) of Salmo salar (Atlantic salmon).